The chain runs to 1029 residues: Probable E3 ubiquitin protein ligase C167.07c (1029 aa).

The 30-residue stretch at 46–75 folds into the IQ domain; the sequence is AENNSVAVQSLSRGFLARRKFKQDFRERWI. In terms of domain architecture, HECT spans 692 to 1029; sequence FGKLLKGPIR…VRSGVGFGFS (338 aa). Catalysis depends on Cys997, which acts as the Glycyl thioester intermediate.

Its subcellular location is the cytoplasm. The protein localises to the nucleus. It catalyses the reaction S-ubiquitinyl-[E2 ubiquitin-conjugating enzyme]-L-cysteine + [acceptor protein]-L-lysine = [E2 ubiquitin-conjugating enzyme]-L-cysteine + N(6)-ubiquitinyl-[acceptor protein]-L-lysine.. Functionally, probable E3 ubiquitin-protein ligase which mediates ubiquitination and subsequent proteasomal degradation of target proteins. The protein is Probable E3 ubiquitin protein ligase C167.07c of Schizosaccharomyces pombe (strain 972 / ATCC 24843) (Fission yeast).